A 197-amino-acid polypeptide reads, in one-letter code: Amino-terminal enhancer of split (197 aa).

Low complexity predominate over residues 1-15 (MMFPQSSSRHSGSSH). Disordered stretches follow at residues 1 to 20 (MMFP…PQQL) and 169 to 197 (LGSQ…DKSD). Residues 166 to 197 (LSALGSQGHLPKEDKNGHEGDRRPDDDGDKSD) are CCN domain. Residues 175–197 (LPKEDKNGHEGDRRPDDDGDKSD) are compositionally biased toward basic and acidic residues.

It belongs to the WD repeat Groucho/TLE family. Monomer. Post-translationally, ubiquitinated by XIAP/BIRC4. As to expression, predominantly expressed in brain, testis and ovary. Ubiquitously expressed in the developing embryo. Present in unfertilized and fertilized eggs.

The protein localises to the nucleus. May act as a transcriptional corepressor. Has a possible role in the negative regulation of proteins containing WD-40 repeats. May be required for the initiation and maintenance of the differentiated state. The sequence is that of Amino-terminal enhancer of split (aes) from Xenopus laevis (African clawed frog).